Here is a 44-residue protein sequence, read N- to C-terminus: Photosystem I reaction center subunit IX (44 aa).

A helical transmembrane segment spans residues 9–29 (FMRSAPIVAAIWISLTAGIII).

It belongs to the PsaJ family.

The protein localises to the cellular thylakoid membrane. Functionally, may help in the organization of the PsaE and PsaF subunits. This is Photosystem I reaction center subunit IX from Prochlorococcus marinus (strain MIT 9515).